The chain runs to 205 residues: Ypt/Rab-type GTPase Rab7 (205 aa).

Residues 17 to 23 (SGVGKTS), 33 to 40 (FSASYKAT), G66, 125 to 128 (NKID), and 157 to 159 (SAK) contribute to the GTP site. The short motif at 37–45 (YKATIGADF) is the Effector region element. 2 S-geranylgeranyl cysteine lipidation sites follow: C203 and C205. Cysteine methyl ester is present on C205.

It belongs to the small GTPase superfamily. Rab family.

Its subcellular location is the cell membrane. With respect to regulation, alternates between an inactive form bound to GDP and an active form bound to GTP. Activated by guanine nucleotide-exchange factors (GEFs), and inactivated by GTPase-activating proteins (GAPs). Its function is as follows. Ypt/Rab-type GTPases are key regulators of membrane trafficking and intracellular vesicular transport. They act as molecular switches that convert between GTP-bound and GDP-bound states, and regulate virtually all steps of membrane traffic from the formation of the transport vesicle at the donor membrane to its fusion at the target membrane. In the GDP-bound state, Ypt proteins are predominantly cytosolic, solubilized through the interaction with a GDP dissociation inhibitor (GDI). In the GTP-bound state, the proteins are membrane bound and interact with specific effector proteins that select cargo, promote vesicle movement, or verify the correct site of fusion. In Neurospora crassa (strain ATCC 24698 / 74-OR23-1A / CBS 708.71 / DSM 1257 / FGSC 987), this protein is Ypt/Rab-type GTPase Rab7 (gtp-14).